The chain runs to 149 residues: Transcriptional repressor NrdR (149 aa).

Residues 3–34 (CPFCSHLETQVIETRVFEDAASIRRRRQCAAC) fold into a zinc finger. The region spanning 49-139 (PAVVKKDGRR…VYRSFEGIDD (91 aa)) is the ATP-cone domain.

Belongs to the NrdR family. Requires Zn(2+) as cofactor.

Negatively regulates transcription of bacterial ribonucleotide reductase nrd genes and operons by binding to NrdR-boxes. The sequence is that of Transcriptional repressor NrdR from Verminephrobacter eiseniae (strain EF01-2).